The chain runs to 517 residues: 2,3-bisphosphoglycerate-independent phosphoglycerate mutase (517 aa).

2 residues coordinate Mn(2+): D12 and S62. S62 serves as the catalytic Phosphoserine intermediate. Substrate contacts are provided by residues H123, 153 to 154, R185, R191, 261 to 264, and K336; these read RD and RSDR. D403, H407, D444, H445, and H463 together coordinate Mn(2+).

The protein belongs to the BPG-independent phosphoglycerate mutase family. Monomer. It depends on Mn(2+) as a cofactor.

It catalyses the reaction (2R)-2-phosphoglycerate = (2R)-3-phosphoglycerate. The protein operates within carbohydrate degradation; glycolysis; pyruvate from D-glyceraldehyde 3-phosphate: step 3/5. Its function is as follows. Catalyzes the interconversion of 2-phosphoglycerate and 3-phosphoglycerate. In Methylobacillus flagellatus (strain ATCC 51484 / DSM 6875 / VKM B-1610 / KT), this protein is 2,3-bisphosphoglycerate-independent phosphoglycerate mutase.